The chain runs to 852 residues: Bifunctional isopimaradiene synthase, chloroplastic (852 aa).

The N-terminal 53 residues, 1-53 (HHLTANTQSIPHFSTTLNAGSSARKRRSLYLRWGKGSNKIIACVGEGATSVPY), are a transit peptide targeting the chloroplast. K252 serves as a coordination point for substrate. D385 and D387 together coordinate Mg(2+). Residues 385–388 (DIDD) carry the DXDD motif motif. K472 contacts substrate. Residues D604, D608, N748, T752, and E756 each contribute to the Mg(2+) site. Positions 604–608 (DDLYD) match the DDXXD motif motif.

This sequence belongs to the terpene synthase family. Tpsd subfamily. Mg(2+) serves as cofactor.

The protein localises to the plastid. Its subcellular location is the chloroplast. It catalyses the reaction (2E,6E,10E)-geranylgeranyl diphosphate = (+)-copalyl diphosphate. The catalysed reaction is (+)-copalyl diphosphate = isopimara-7,15-diene + diphosphate. The protein operates within terpene metabolism; oleoresin biosynthesis. In terms of biological role, involved in defensive oleoresin formation in conifers in response to insect attack or other injury. Involved in diterpene (C20) olefins biosynthesis. Bifunctional enzyme that catalyzes two sequential cyclizations of geranylgeranyl diphosphate (GGPP) to isopimara-7,15-diene. The sequence is that of Bifunctional isopimaradiene synthase, chloroplastic (TPS-ISO) from Abies balsamea (Balsam fir).